Here is a 442-residue protein sequence, read N- to C-terminus: MRYLPLTPEDRAQMLGVIGAPDVDALFADVPAAARNPAIGLAPHAGELEVERELSGLAALNRAAGAGPFFCGAGAYRHHVPATVDHIIQRSEFLTSYTPYQPEIAQGTLQVLFEFQTQVARLTGLDVANASMYDGSTACAEAVMMAQRVTRREKAILSGGLHPHYAATTQTIAHAEGMEIVRQPAAIDAEAAVIEAIDAETACVVVQTPNVFGVVTDVSKIAEAAHAKGALLIVVTTEAVAYGLLKSPGEMGADIAVAEGQSIGNALNYGGPYVGLFACREKFVRNMPGRLCGETVDAEGRRGYVLTLSTREQHIRREKATSNICTNSGLCALAFSIHLSLLGGKGLSQLARVNHARARELKAAVEAAGLEVLTPRFFNEIAVRTKGPAADLVERLLADGVVAGVPFSRLDPGAGLDDVLLLCATETTTSDDIAALKDALAR.

This sequence belongs to the GcvP family. N-terminal subunit subfamily. In terms of assembly, the glycine cleavage system is composed of four proteins: P, T, L and H. In this organism, the P 'protein' is a heterodimer of two subunits.

It carries out the reaction N(6)-[(R)-lipoyl]-L-lysyl-[glycine-cleavage complex H protein] + glycine + H(+) = N(6)-[(R)-S(8)-aminomethyldihydrolipoyl]-L-lysyl-[glycine-cleavage complex H protein] + CO2. Its function is as follows. The glycine cleavage system catalyzes the degradation of glycine. The P protein binds the alpha-amino group of glycine through its pyridoxal phosphate cofactor; CO(2) is released and the remaining methylamine moiety is then transferred to the lipoamide cofactor of the H protein. This chain is Probable glycine dehydrogenase (decarboxylating) subunit 1, found in Phenylobacterium zucineum (strain HLK1).